The following is a 412-amino-acid chain: Argininosuccinate synthase (412 aa).

ATP is bound by residues 10–18 and Ala36; that span reads AYSGGLDTS. L-citrulline is bound by residues Tyr87 and Ser92. A Phosphotyrosine modification is found at Tyr87. An N6-acetyllysine modification is found at Lys112. Tyr113 is subject to Phosphotyrosine. Position 115-123 (115-123) interacts with ATP; that stretch reads SHGATGKGN. Positions 119, 123, and 124 each coordinate L-aspartate. Residue Asn123 coordinates L-citrulline. Arg127 serves as a coordination point for L-citrulline. N6-acetyllysine; by CLOCK is present on residues Lys165 and Lys176. Positions 180 and 189 each coordinate L-citrulline. A Phosphoserine modification is found at Ser180. Ser219 is modified (phosphoserine). 2 residues coordinate L-citrulline: Glu270 and Tyr282.

The protein belongs to the argininosuccinate synthase family. Type 1 subfamily. Homotetramer. Interacts with NMRAL1. Interacts with CLOCK; in a circadian manner. Forms tissue-specific complexes with ASL, SLC7A1, HSP90AA1 and nitric oxide synthase NOS1, NOS2 or NOS3; the complex regulates cell-autonomous L-arginine synthesis and citrulline recycling while channeling extracellular L-arginine to nitric oxide synthesis pathway. In terms of processing, acetylated by CLOCK in a circadian manner which negatively regulates its enzyme activity. Deacetylated by histone deacetylases.

The protein localises to the cytoplasm. It is found in the cytosol. The enzyme catalyses L-citrulline + L-aspartate + ATP = 2-(N(omega)-L-arginino)succinate + AMP + diphosphate + H(+). It functions in the pathway amino-acid biosynthesis; L-arginine biosynthesis; L-arginine from L-ornithine and carbamoyl phosphate: step 2/3. The protein operates within nitrogen metabolism; urea cycle; (N(omega)-L-arginino)succinate from L-aspartate and L-citrulline: step 1/1. Functionally, one of the enzymes of the urea cycle, the metabolic pathway transforming neurotoxic amonia produced by protein catabolism into inocuous urea in the liver of ureotelic animals. Catalyzes the formation of arginosuccinate from aspartate, citrulline and ATP and together with ASL it is responsible for the biosynthesis of arginine in most body tissues. This is Argininosuccinate synthase from Bos taurus (Bovine).